The primary structure comprises 1001 residues: E3 ubiquitin-protein ligase BRE1B (1001 aa).

A disordered region spans residues 1–40 (MSGLSNKRAAGDGGSGPPEKKMNREEKTTTTLIEPIRLGG). The span at 18–28 (PEKKMNREEKT) shows a compositional bias: basic and acidic residues. Position 20 is an N6-acetyllysine (Lys-20). Ser-42 bears the Phosphoserine mark. A coiled-coil region spans residues 55–91 (KNKKLAERLEQRQACEDELRERIEKLEKRQATDDATL). Residues 122-142 (TEVPGCQEGLTRDVIPRPDPG) are disordered. 2 coiled-coil regions span residues 189 to 377 (KAAV…LRSL) and 437 to 525 (LQKK…ASGS). N6-acetyllysine is present on residues Lys-355 and Lys-517. The segment at 519 to 647 (RAQASGSSHC…KAKVEEAKRK (129 aa)) is disordered. Residues 565–576 (ALLAGATSATSS) are compositionally biased toward low complexity. Glycyl lysine isopeptide (Lys-Gly) (interchain with G-Cter in SUMO2) cross-links involve residues Lys-578 and Lys-579. Residues Ser-584 and Ser-585 each carry the phosphoserine modification. 2 stretches are compositionally biased toward basic and acidic residues: residues 602–619 (RGREPEARPKRELREREG) and 633–647 (RADREKAKVEEAKRK). Residues 627–946 (AASTLSRADR…EEIKEYKARL (320 aa)) are a coiled coil. The segment at 948-987 (CPCCNTRKKDAVLTKCFHVFCFECVRGRYEARQRKCPKCN) adopts an RING-type zinc-finger fold.

This sequence belongs to the BRE1 family. In terms of assembly, component of the RNF20/40 complex (also known as BRE1 complex) probably composed of 2 copies of RNF20/BRE1A and 2 copies of RNF40/BRE1B. Interacts with UBE2E1/UBCH6. Interacts with RB1 and WAC.

The protein localises to the nucleus. The catalysed reaction is S-ubiquitinyl-[E2 ubiquitin-conjugating enzyme]-L-cysteine + [acceptor protein]-L-lysine = [E2 ubiquitin-conjugating enzyme]-L-cysteine + N(6)-ubiquitinyl-[acceptor protein]-L-lysine.. The protein operates within protein modification; protein ubiquitination. In terms of biological role, component of the RNF20/40 E3 ubiquitin-protein ligase complex that mediates monoubiquitination of 'Lys-120' of histone H2B (H2BK120ub1). H2BK120ub1 gives a specific tag for epigenetic transcriptional activation and is also prerequisite for histone H3 'Lys-4' and 'Lys-79' methylation (H3K4me and H3K79me, respectively). It thereby plays a central role in histone code and gene regulation. The RNF20/40 complex forms a H2B ubiquitin ligase complex in cooperation with the E2 enzyme UBE2A or UBE2B; reports about the cooperation with UBE2E1/UBCH are contradictory. Required for transcriptional activation of Hox genes. The protein is E3 ubiquitin-protein ligase BRE1B (Rnf40) of Mus musculus (Mouse).